Consider the following 231-residue polypeptide: Large ribosomal subunit protein uL1 (231 aa).

Belongs to the universal ribosomal protein uL1 family. In terms of assembly, part of the 50S ribosomal subunit.

Binds directly to 23S rRNA. The L1 stalk is quite mobile in the ribosome, and is involved in E site tRNA release. Its function is as follows. Protein L1 is also a translational repressor protein, it controls the translation of the L11 operon by binding to its mRNA. The sequence is that of Large ribosomal subunit protein uL1 from Polaromonas naphthalenivorans (strain CJ2).